The following is a 434-amino-acid chain: 3-phosphoshikimate 1-carboxyvinyltransferase (434 aa).

Residues Lys-22, Ser-23, and Arg-27 each coordinate 3-phosphoshikimate. Residue Lys-22 coordinates phosphoenolpyruvate. Residues Gly-93 and Arg-121 each coordinate phosphoenolpyruvate. Ser-168, Ser-169, Gln-170, Ser-199, Asp-320, and Lys-347 together coordinate 3-phosphoshikimate. Gln-170 is a phosphoenolpyruvate binding site. Residue Asp-320 is the Proton acceptor of the active site. Arg-351, Arg-394, and Lys-419 together coordinate phosphoenolpyruvate.

It belongs to the EPSP synthase family. As to quaternary structure, monomer.

Its subcellular location is the cytoplasm. It carries out the reaction 3-phosphoshikimate + phosphoenolpyruvate = 5-O-(1-carboxyvinyl)-3-phosphoshikimate + phosphate. The protein operates within metabolic intermediate biosynthesis; chorismate biosynthesis; chorismate from D-erythrose 4-phosphate and phosphoenolpyruvate: step 6/7. Catalyzes the transfer of the enolpyruvyl moiety of phosphoenolpyruvate (PEP) to the 5-hydroxyl of shikimate-3-phosphate (S3P) to produce enolpyruvyl shikimate-3-phosphate and inorganic phosphate. This chain is 3-phosphoshikimate 1-carboxyvinyltransferase, found in Burkholderia orbicola (strain AU 1054).